The sequence spans 250 residues: Triosephosphate isomerase (250 aa).

9 to 11 contacts substrate; it reads NWK. H96 acts as the Electrophile in catalysis. E166 acts as the Proton acceptor in catalysis. Residues G172, S212, and 233-234 each bind substrate; that span reads GG.

This sequence belongs to the triosephosphate isomerase family. In terms of assembly, homodimer.

It localises to the cytoplasm. It carries out the reaction D-glyceraldehyde 3-phosphate = dihydroxyacetone phosphate. Its pathway is carbohydrate biosynthesis; gluconeogenesis. The protein operates within carbohydrate degradation; glycolysis; D-glyceraldehyde 3-phosphate from glycerone phosphate: step 1/1. In terms of biological role, involved in the gluconeogenesis. Catalyzes stereospecifically the conversion of dihydroxyacetone phosphate (DHAP) to D-glyceraldehyde-3-phosphate (G3P). The polypeptide is Triosephosphate isomerase (Chlorobium phaeovibrioides (strain DSM 265 / 1930) (Prosthecochloris vibrioformis (strain DSM 265))).